The sequence spans 400 residues: PHD finger protein 24 (400 aa).

Glycine 2 is lipidated: N-myristoyl glycine. Residues 29–38 show a composition bias toward basic and acidic residues; that stretch reads RDRPSIRRGG. The interval 29-65 is disordered; it reads RDRPSIRRGGELPGSRRGTVEGSVQEVQEEKEAEASA. The residue at position 36 (arginine 36) is an Omega-N-methylarginine. The residue at position 43 (serine 43) is a Phosphoserine. Threonine 47 is subject to Phosphothreonine. A Phosphoserine modification is found at serine 51. Residues 129-190 form a PHD-type zinc finger; it reads NDEMCDVCEV…TGWSCYYCDN (62 aa). Arginine 307 carries the omega-N-methylarginine modification.

In Mus musculus (Mouse), this protein is PHD finger protein 24.